We begin with the raw amino-acid sequence, 499 residues long: UTP--glucose-1-phosphate uridylyltransferase (499 aa).

Residue Ser2 is modified to N-acetylserine. Residue Ser17 is modified to Phosphoserine. Thr19 bears the Phosphothreonine mark. A phosphoserine mark is found at Ser21 and Ser79. UTP is bound by residues 109 to 112, Lys123, Gln186, and Gly215; that span reads LNGG. 111–112 is a binding site for substrate; that stretch reads GG. Lys123 provides a ligand contact to Mg(2+). Substrate is bound by residues His216 and 244 to 246; that span reads NGD. Residue Asp246 coordinates UTP. Asp246 contacts Mg(2+). Arg369 is subject to Omega-N-methylarginine. Residue Lys388 coordinates UTP. The active site involves Lys388. The interval 448–499 is oligomerization; that stretch reads HLTITGNVFLGKDVTLRGTVIIVCSDGHKIDIPNGSILENVVVTGNLQILEH.

Belongs to the UDPGP type 1 family. In terms of assembly, homooctamer.

It catalyses the reaction alpha-D-glucose 1-phosphate + UTP + H(+) = UDP-alpha-D-glucose + diphosphate. In terms of biological role, plays a central role as a glucosyl donor in cellular metabolic pathways. The protein is UTP--glucose-1-phosphate uridylyltransferase of Saccharomyces cerevisiae (strain ATCC 204508 / S288c) (Baker's yeast).